A 433-amino-acid chain; its full sequence is Gamma-glutamyl phosphate reductase (433 aa).

The protein belongs to the gamma-glutamyl phosphate reductase family.

The protein localises to the cytoplasm. It catalyses the reaction L-glutamate 5-semialdehyde + phosphate + NADP(+) = L-glutamyl 5-phosphate + NADPH + H(+). It functions in the pathway amino-acid biosynthesis; L-proline biosynthesis; L-glutamate 5-semialdehyde from L-glutamate: step 2/2. Its function is as follows. Catalyzes the NADPH-dependent reduction of L-glutamate 5-phosphate into L-glutamate 5-semialdehyde and phosphate. The product spontaneously undergoes cyclization to form 1-pyrroline-5-carboxylate. This is Gamma-glutamyl phosphate reductase from Rhodopseudomonas palustris (strain BisB18).